The primary structure comprises 37 residues: Dolichyl-diphosphooligosaccharide--protein glycosyltransferase subunit 4A (37 aa).

The Lumenal segment spans residues 1-7 (MIDDQDL). Residues 8–28 (GFIANFLGIFIFALVIAYHYV) form a helical membrane-spanning segment. The Cytoplasmic segment spans residues 29–37 (TADPKYEAT).

Belongs to the OST4 family. Component of the oligosaccharyltransferase (OST) complex.

The protein localises to the endoplasmic reticulum membrane. Its function is as follows. Subunit of the oligosaccharyl transferase (OST) complex that catalyzes the initial transfer of a defined glycan (Glc(3)Man(9)GlcNAc(2) in eukaryotes) from the lipid carrier dolichol-pyrophosphate to an asparagine residue within an Asn-X-Ser/Thr consensus motif in nascent polypeptide chains, the first step in protein N-glycosylation. N-glycosylation occurs cotranslationally and the complex associates with the Sec61 complex at the channel-forming translocon complex that mediates protein translocation across the endoplasmic reticulum (ER). All subunits are required for a maximal enzyme activity. This Arabidopsis thaliana (Mouse-ear cress) protein is Dolichyl-diphosphooligosaccharide--protein glycosyltransferase subunit 4A (OST4A).